The sequence spans 346 residues: E3 ubiquitin-protein ligase MARCHF9 (346 aa).

Disordered regions lie at residues glycine 20–glycine 39 and serine 47–leucine 92. Over residues proline 63–arginine 75 the composition is skewed to basic and acidic residues. Residues glycine 77–glycine 90 are compositionally biased toward pro residues. An RING-CH-type zinc finger spans residues aspartate 102–leucine 162. Residues cysteine 110, cysteine 113, cysteine 126, cysteine 128, histidine 136, cysteine 139, cysteine 152, and cysteine 155 each contribute to the Zn(2+) site. A run of 2 helical transmembrane segments spans residues isoleucine 185–serine 205 and leucine 219–isoleucine 239. Disordered regions lie at residues aspartate 273–alanine 301 and proline 326–valine 346. The span at proline 284–threonine 296 shows a compositional bias: polar residues.

In terms of assembly, homodimer. As to expression, ubiquitously expressed.

The protein localises to the golgi apparatus membrane. The protein resides in the lysosome membrane. The enzyme catalyses S-ubiquitinyl-[E2 ubiquitin-conjugating enzyme]-L-cysteine + [acceptor protein]-L-lysine = [E2 ubiquitin-conjugating enzyme]-L-cysteine + N(6)-ubiquitinyl-[acceptor protein]-L-lysine.. Its pathway is protein modification; protein ubiquitination. Its function is as follows. E3 ubiquitin-protein ligase that may mediate ubiquitination of MHC-I, CD4 and ICAM1, and promote their subsequent endocytosis and sorting to lysosomes via multivesicular bodies. E3 ubiquitin ligases accept ubiquitin from an E2 ubiquitin-conjugating enzyme in the form of a thioester and then directly transfer the ubiquitin to targeted substrates. The polypeptide is E3 ubiquitin-protein ligase MARCHF9 (Homo sapiens (Human)).